The sequence spans 909 residues: Protein translocase subunit SecA (909 aa).

ATP is bound by residues glutamine 87, 105–109, and aspartate 513; that span reads GEGKT. The tract at residues 834 to 909 is disordered; it reads QEEVERMEEQ…KYKQCHGKID (76 aa). A compositionally biased stretch (basic and acidic residues) spans 836 to 853; it reads EVERMEEQRRAQAEEAAR. The segment covering 854–863 has biased composition (low complexity); it reads RAQAQHAAAQ. The segment covering 874–889 has biased composition (basic and acidic residues); that stretch reads EGAHQPMVREERKVGR. Zn(2+) contacts are provided by cysteine 893, cysteine 895, cysteine 904, and histidine 905. Basic residues predominate over residues 899–909; it reads KKYKQCHGKID.

It belongs to the SecA family. As to quaternary structure, monomer and homodimer. Part of the essential Sec protein translocation apparatus which comprises SecA, SecYEG and auxiliary proteins SecDF-YajC and YidC. It depends on Zn(2+) as a cofactor.

It is found in the cell inner membrane. It localises to the cytoplasm. The catalysed reaction is ATP + H2O + cellular proteinSide 1 = ADP + phosphate + cellular proteinSide 2.. In terms of biological role, part of the Sec protein translocase complex. Interacts with the SecYEG preprotein conducting channel. Has a central role in coupling the hydrolysis of ATP to the transfer of proteins into and across the cell membrane, serving both as a receptor for the preprotein-SecB complex and as an ATP-driven molecular motor driving the stepwise translocation of polypeptide chains across the membrane. The polypeptide is Protein translocase subunit SecA (Vibrio campbellii (strain ATCC BAA-1116)).